The following is a 209-amino-acid chain: Thiamine-phosphate synthase (209 aa).

4-amino-2-methyl-5-(diphosphooxymethyl)pyrimidine is bound by residues 35–39 (QYRDK) and N67. Positions 68 and 86 each coordinate Mg(2+). T105 lines the 4-amino-2-methyl-5-(diphosphooxymethyl)pyrimidine pocket. 132–134 (SNT) lines the 2-[(2R,5Z)-2-carboxy-4-methylthiazol-5(2H)-ylidene]ethyl phosphate pocket. K135 is a 4-amino-2-methyl-5-(diphosphooxymethyl)pyrimidine binding site. G162 lines the 2-[(2R,5Z)-2-carboxy-4-methylthiazol-5(2H)-ylidene]ethyl phosphate pocket.

It belongs to the thiamine-phosphate synthase family. Mg(2+) serves as cofactor.

It catalyses the reaction 2-[(2R,5Z)-2-carboxy-4-methylthiazol-5(2H)-ylidene]ethyl phosphate + 4-amino-2-methyl-5-(diphosphooxymethyl)pyrimidine + 2 H(+) = thiamine phosphate + CO2 + diphosphate. It carries out the reaction 2-(2-carboxy-4-methylthiazol-5-yl)ethyl phosphate + 4-amino-2-methyl-5-(diphosphooxymethyl)pyrimidine + 2 H(+) = thiamine phosphate + CO2 + diphosphate. The catalysed reaction is 4-methyl-5-(2-phosphooxyethyl)-thiazole + 4-amino-2-methyl-5-(diphosphooxymethyl)pyrimidine + H(+) = thiamine phosphate + diphosphate. It participates in cofactor biosynthesis; thiamine diphosphate biosynthesis; thiamine phosphate from 4-amino-2-methyl-5-diphosphomethylpyrimidine and 4-methyl-5-(2-phosphoethyl)-thiazole: step 1/1. Condenses 4-methyl-5-(beta-hydroxyethyl)thiazole monophosphate (THZ-P) and 2-methyl-4-amino-5-hydroxymethyl pyrimidine pyrophosphate (HMP-PP) to form thiamine monophosphate (TMP). This Pseudomonas fluorescens (strain SBW25) protein is Thiamine-phosphate synthase.